A 266-amino-acid chain; its full sequence is MEWFEALILGLIQGLTEYLPVSSSGHLAIGSALFGIEGEENLAFTIVVHVATVFSTLVILWKEIDWIFRGLFKFEMNSETRYVINILISMLPIGIVGVFFKDEVEAIFGSGLLIVGCMLLLTAALLSFSYYAKPRQKENISMKDAFIIGLAQACAVLPGLSRSGSTIATGLLLGDNKAKLAQFSFLMVIPPILGEALLDGMKMIKGEAIAGDIPTLSLIVGFIAAFVSGCLACKWMINIVKKGKLIYFAIYCAIVGVVTIVVSQLQ.

7 helical membrane passes run 41 to 61, 82 to 102, 106 to 126, 140 to 160, 180 to 200, 213 to 233, and 245 to 265; these read NLAFTIVVHVATVFSTLVILW, YVINILISMLPIGIVGVFFKD, AIFGSGLLIVGCMLLLTAALL, ISMKDAFIIGLAQACAVLPGL, LAQFSFLMVIPPILGEALLDG, IPTLSLIVGFIAAFVSGCLAC, and LIYFAIYCAIVGVVTIVVSQL.

This sequence belongs to the UppP family.

The protein resides in the cell inner membrane. The catalysed reaction is di-trans,octa-cis-undecaprenyl diphosphate + H2O = di-trans,octa-cis-undecaprenyl phosphate + phosphate + H(+). Functionally, catalyzes the dephosphorylation of undecaprenyl diphosphate (UPP). Confers resistance to bacitracin. The polypeptide is Undecaprenyl-diphosphatase (Bacteroides fragilis (strain YCH46)).